The following is a 29-amino-acid chain: Cyclotide mech-7 (29 aa).

The cyclopeptide (Gly-Asp) cross-link spans 1–29 (GIPICGETCTIGTCNTPGCTCSWPVCTRD). Cystine bridges form between Cys5-Cys19, Cys9-Cys21, and Cys14-Cys26.

Post-translationally, this is a cyclic peptide. Contains 3 disulfide bonds.

Probably participates in a plant defense mechanism (Potential). Binds to and induces leakage in phospholipd membranes, particularly ones containing 1-palmitoyl-2-oleophosphatidylethanolamine (POPE). In Melicytus chathamicus (Chatham Island mahoe), this protein is Cyclotide mech-7.